Here is a 302-residue protein sequence, read N- to C-terminus: 4-hydroxy-tetrahydrodipicolinate synthase (302 aa).

T50 lines the pyruvate pocket. Catalysis depends on Y138, which acts as the Proton donor/acceptor. The Schiff-base intermediate with substrate role is filled by K167. V209 contributes to the pyruvate binding site.

The protein belongs to the DapA family. In terms of assembly, homotetramer; dimer of dimers.

Its subcellular location is the cytoplasm. It catalyses the reaction L-aspartate 4-semialdehyde + pyruvate = (2S,4S)-4-hydroxy-2,3,4,5-tetrahydrodipicolinate + H2O + H(+). It functions in the pathway amino-acid biosynthesis; L-lysine biosynthesis via DAP pathway; (S)-tetrahydrodipicolinate from L-aspartate: step 3/4. Functionally, catalyzes the condensation of (S)-aspartate-beta-semialdehyde [(S)-ASA] and pyruvate to 4-hydroxy-tetrahydrodipicolinate (HTPA). This Salinibacter ruber (strain DSM 13855 / M31) protein is 4-hydroxy-tetrahydrodipicolinate synthase.